A 389-amino-acid polypeptide reads, in one-letter code: Pyruvate synthase subunit PorA (389 aa).

In terms of assembly, heterotetramer of one alpha, one beta, one delta and one gamma chain.

It carries out the reaction 2 oxidized [2Fe-2S]-[ferredoxin] + pyruvate + CoA = 2 reduced [2Fe-2S]-[ferredoxin] + acetyl-CoA + CO2 + H(+). The sequence is that of Pyruvate synthase subunit PorA (porA) from Methanocaldococcus jannaschii (strain ATCC 43067 / DSM 2661 / JAL-1 / JCM 10045 / NBRC 100440) (Methanococcus jannaschii).